A 332-amino-acid chain; its full sequence is Nuclear migration protein nudC (332 aa).

Residues 122–161 form a disordered region; it reads RQQLLDSAGGEPSASNRDGISKPIEKVDDESDKSELGKLM. Positions 168 to 259 constitute a CS domain; the sequence is CTLENYTWTQ…NKMNWWSRLV (92 aa).

The protein belongs to the nudC family. In terms of assembly, interacts with PCID2.

It is found in the cytoplasm. Functionally, chaperone protein with functions in nuclear localization and cytoplasmic mRNA trafficking. In postmitotic neurons, acts with nudE downstream of dar1 to ensure correct positioning of the nuclei in primary dendrites and as a consequence, is required for determining multipolar neuron morphology. Stabilizes PCID2 in the cytoplasm and thereby is required for promoting cytoplasmic mRNA trafficking. The sequence is that of Nuclear migration protein nudC from Drosophila melanogaster (Fruit fly).